The sequence spans 252 residues: MKILVSNDDGVLAPGIKILANELSTLGEVKVVAPDRNRSGASNSLTLTQPLRVKQLDNGYYSVDGTPTDCVHLALTGFLEPIADIVVSGINEGANLGDDVLYSGTVAAAMEGRYLGLPAIAISMVGDNIQHYETAAIIAKQLVIKLSANKLPSQTILNVNVPDLPLNQIRGMQVTRLGTRHSAEPIIKEYDPRGRPIYWVGPPGIEADAGAGTDFFAIKTGHVSITPLHLDMTHYKLFDHLSNLLNEICIEN.

Positions 8, 9, 39, and 91 each coordinate a divalent metal cation.

Belongs to the SurE nucleotidase family. A divalent metal cation serves as cofactor.

The protein localises to the cytoplasm. It carries out the reaction a ribonucleoside 5'-phosphate + H2O = a ribonucleoside + phosphate. In terms of biological role, nucleotidase that shows phosphatase activity on nucleoside 5'-monophosphates. This Legionella pneumophila (strain Corby) protein is 5'-nucleotidase SurE.